Reading from the N-terminus, the 635-residue chain is MNSAVIELFRHHVNNIPNILPHQLATLDYLVRSIIDENKSVLLFHIMGSGKTIIALLFALVASRFKKVYILVPNINILKIFNYSMDVVINLFNADYILENIFIYSTTSFYSINYNDNVINYNGLSRYNNAIFIIDEAHNIFGNNTGELMTVIKNKNKIPFLLLSGSPITNTPITLSNIISLMSDEEINFGDIIIQGKKVFQILLNEHGVNVLKNILKGRISYYKMPDTDLPGIQYHGKSFLDTRVVYCNMSKLQEKDYINVRKMCNNEMFEKNMNNVSLAVLGQLNLINNLDILFQEQDKELYPNLKINNGVLYGEELVTLNISSKFKYFITKIESLKGKHFIYFSNSTYGGLIIKYIMLSNGYSEYNGSQGTHPKLIHGRPKTFAIVTSKMKASLEDLLVTYNSLANDDGSQIMFLFSSNIMSESYTLKEVRNIWFMTIPDTFSQYNQILGRSIRKFSYKDITQPVNVYLLAAVYSDFNDTIESLDDYSLEEINTLPFDIKKLLYLKFKTKETNRIYSILENISDSYTQPPHPHIVEIVLGEIVRQFFYHHSRIKHNDERLLAAVKSVLTNTEAAKKYIKEIVDGHFFVSNKVFDKSLLYMYNDEIITVPFKLSHEPFVWGVNFRKEYNVVSSP.

Positions 32-185 constitute a Helicase ATP-binding domain; it reads RSIIDENKSV…SNIISLMSDE (154 aa). Residue 45-52 coordinates ATP; that stretch reads HIMGSGKT. Positions 135–138 match the DEXH box motif; that stretch reads DEAH. The region spanning 326–505 is the Helicase C-terminal domain; the sequence is KFKYFITKIE…TLPFDIKKLL (180 aa).

It belongs to the helicase family. VETF subfamily. In terms of assembly, heterodimer of a 70 kDa and a 82 kDa subunit. Part of the early transcription complex composed of ETF, RAP94, and the DNA-directed RNA polymerase.

The protein localises to the virion. Functionally, acts with RNA polymerase to initiate transcription from early gene promoters. Is recruited by the RPO-associated protein of 94 kDa (RAP94) to form the early transcription complex, which also contains the core RNA polymerase. ETF heterodimer binds to early gene promoters. The sequence is that of Early transcription factor 70 kDa subunit (VETFS) from Oryctolagus cuniculus (Rabbit).